Here is an 891-residue protein sequence, read N- to C-terminus: Putative alpha,alpha-trehalose-phosphate synthase [UDP-forming] 100 kDa subunit (891 aa).

Thr-88 bears the Phosphothreonine mark. Residues 88–126 form a disordered region; that stretch reads TGGSMTPGLGAMSPIPGSGRSSPLYTQPRSRATSPSRVR. Positions 106-124 are enriched in polar residues; that stretch reads GRSSPLYTQPRSRATSPSR. Phosphoserine is present on residues Ser-108 and Ser-109. Positions 132–613 are glycosyltransferase; sequence AAPGIGAGAL…VTGFETKLKK (482 aa).

This sequence in the N-terminal section; belongs to the glycosyltransferase 20 family.

It carries out the reaction D-glucose 6-phosphate + UDP-alpha-D-glucose = alpha,alpha-trehalose 6-phosphate + UDP + H(+). This is Putative alpha,alpha-trehalose-phosphate synthase [UDP-forming] 100 kDa subunit from Schizosaccharomyces pombe (strain 972 / ATCC 24843) (Fission yeast).